The chain runs to 181 residues: Cyclic phosphodiesterase (181 aa).

Catalysis depends on H42, which acts as the Proton donor/acceptor. T44 serves as a coordination point for substrate. Cystine bridges form between C64–C177 and C104–C110. The Proton donor/acceptor role is filled by H119. Substrate contacts are provided by S121 and Y124.

The protein belongs to the 2H phosphoesterase superfamily. CPD1 family. Expressed in leaves, stems, roots, floral buds and germinating seeds.

The protein localises to the cytoplasm. The catalysed reaction is ADP-alpha-D-ribose 1'',2''-cyclic phosphate + H2O = ADP-alpha-D-ribose 1''-phosphate + H(+). It carries out the reaction 2',3'-cyclophospho-AMP + H2O = adenosine 2'-phosphate + H(+). The enzyme catalyses 2',3'-cyclophospho-GMP + H2O = guanosine 2'-phosphate + H(+). It catalyses the reaction 2',3'-cyclophospho-UMP + H2O = uridine 2'-phosphate + H(+). The catalysed reaction is 2',3'-cyclophospho-CMP + H2O = cytidine 2'-phosphate + H(+). Inhibited by Cu(2+) and Zn(2+) at 0.5 mM by 93 and 87% respectively. Not inhibited by Ca(2+), Mg(2+), Co(2+), Ni(2+), and EDTA at 0.5 mM. In terms of biological role, hydrolyzes ADP-ribose 1'',2''-cyclic phosphate (Appr&gt;1) that is produced during tRNA splicing into ADP-ribose 1''-phosphate (Appr-1''p). Also acts on nucleoside 2',3'-cyclic phosphates. The protein is Cyclic phosphodiesterase of Arabidopsis thaliana (Mouse-ear cress).